Here is a 70-residue protein sequence, read N- to C-terminus: Putative membrane protein insertion efficiency factor (70 aa).

This sequence belongs to the UPF0161 family.

Its subcellular location is the cell membrane. In terms of biological role, could be involved in insertion of integral membrane proteins into the membrane. The chain is Putative membrane protein insertion efficiency factor from Finegoldia magna (strain ATCC 29328 / DSM 20472 / WAL 2508) (Peptostreptococcus magnus).